We begin with the raw amino-acid sequence, 113 residues long: Coat protein TP1 (113 aa).

It localises to the virion. The sequence is that of Coat protein TP1 from Thermoproteus tenax virus 1 (strain KRA1) (TTV1).